A 101-amino-acid polypeptide reads, in one-letter code: MFDQTTHTEAHPLTVGKIETANGTIKPQLLRDAVKRAVSNFFAQLDGQEAQEVYEMVLCEVEAPLLDIIMQHTRGNQTRAANMLGINRGTLRKKLKKYGMN.

Residues 77–96 (QTRAANMLGINRGTLRKKLK) constitute a DNA-binding region (H-T-H motif).

This sequence belongs to the transcriptional regulatory Fis family. In terms of assembly, homodimer.

Activates ribosomal RNA transcription. Plays a direct role in upstream activation of rRNA promoters. This chain is DNA-binding protein Fis, found in Shewanella amazonensis (strain ATCC BAA-1098 / SB2B).